The sequence spans 215 residues: Ribonuclease S-6 (215 aa).

A signal peptide spans 1–22 (MFNLPLTSVFVIFLFALSPIYG). Q32 provides a ligand contact to RNA. Residues C38 and C43 are joined by a disulfide bond. N49 carries an N-linked (GlcNAc...) asparagine glycan. Position 53 (H53) interacts with RNA. H53 acts as the Proton donor in catalysis. N-linked (GlcNAc...) asparagine glycosylation occurs at N59. Residues C67 and C116 are joined by a disulfide bond. Residues 91–92 (DL), R94, F105, 108–109 (RE), and 112–113 (KH) contribute to the RNA site. Residue E109 is part of the active site. Catalysis depends on H113, which acts as the Proton acceptor. N-linked (GlcNAc...) asparagine glycosylation is found at N160 and N172. 2 cysteine pairs are disulfide-bonded: C175/C204 and C187/C198.

The protein belongs to the RNase T2 family.

It is found in the secreted. Its subcellular location is the extracellular space. The enzyme catalyses a ribonucleotidyl-ribonucleotide-RNA + H2O = a 3'-end 3'-phospho-ribonucleotide-RNA + a 5'-end dephospho-ribonucleoside-RNA + H(+). Its function is as follows. Self-incompatibility (SI) is the inherited ability of a flowering plant to prevent self-fertilization by discriminating between self and non-self pollen during pollination. In many species of the Solanaceae, self-incompatibility is controlled by the single, multiallelic locus S. This stylar glycoprotein is associated with expression of self-incompatibility in potato. The polypeptide is Ribonuclease S-6 (Nicotiana alata (Winged tobacco)).